The primary structure comprises 408 residues: Putative FBD-associated F-box protein At5g50270 (408 aa).

In terms of domain architecture, F-box spans 1–54; that stretch reads MDRISGLPDELLLRVLSLLPNVKDVVVTMVLSKRWQFLWMMVPKLVYDDSYQNL. The FBD domain occupies 345-408; that stretch reads PLRDDLSSVP…VNPDKKYEMI (64 aa).

The chain is Putative FBD-associated F-box protein At5g50270 from Arabidopsis thaliana (Mouse-ear cress).